We begin with the raw amino-acid sequence, 227 residues long: Lipoprotein-releasing system ATP-binding protein LolD (227 aa).

The ABC transporter domain maps to 6-227; it reads LKIEGLRKTY…HLEDGVLVER (222 aa). 43-50 serves as a coordination point for ATP; that stretch reads APSGAGKS.

The protein belongs to the ABC transporter superfamily. Lipoprotein translocase (TC 3.A.1.125) family. The complex is composed of two ATP-binding proteins (LolD) and two transmembrane proteins (LolC and LolE).

Its subcellular location is the cell inner membrane. Part of the ABC transporter complex LolCDE involved in the translocation of mature outer membrane-directed lipoproteins, from the inner membrane to the periplasmic chaperone, LolA. Responsible for the formation of the LolA-lipoprotein complex in an ATP-dependent manner. This chain is Lipoprotein-releasing system ATP-binding protein LolD, found in Ruegeria sp. (strain TM1040) (Silicibacter sp.).